The chain runs to 273 residues: Histone H1.2 (273 aa).

The segment at methionine 1–proline 63 is disordered. Serine 2 carries the N-acetylserine modification. Position 14 is a phosphoserine (serine 14). A compositionally biased stretch (basic residues) spans glycine 33–threonine 59. The H15 domain occupies serine 61–serine 130. Glycyl lysine isopeptide (Lys-Gly) (interchain with G-Cter in ubiquitin) cross-links involve residues lysine 156 and lysine 165. Low complexity-rich tracts occupy residues lysine 193–lysine 216 and lysine 237–serine 256. Residues lysine 193 to lysine 273 form a disordered region. Residues valine 257–lysine 273 show a composition bias toward basic residues.

It belongs to the histone H1/H5 family.

It is found in the nucleus. The protein resides in the chromosome. In terms of biological role, histones H1 are necessary for the condensation of nucleosome chains into higher-order structures. This is Histone H1.2 from Arabidopsis thaliana (Mouse-ear cress).